A 387-amino-acid chain; its full sequence is Beta-alanyl-dopamine/carcinine hydrolase (387 aa).

The protein belongs to the peptidase C45 family. As to quaternary structure, the unprocessed protein forms homodimers. May form heterodimers composed of a 15 kDa alpha subunit and a 30 kDa beta subunit. The protein is synthesized as a 43 kDa precursor which is then self-processed into a 15 kDa alpha subunit and a 30 kDa beta subunit. Processing appears to be necessary for beta-alanyl-dopamine/carcinine hydrolase activity. The beta subunit carries the beta-alanyl-dopamine/carcinine hydrolase activity. Expressed in body, head, optic lobes and retina (at protein level). Expressed in photoreceptor cells R1-R6 in the lamina and in photoreceptor cells R7 and R8 in the medulla (at protein level).

Its subcellular location is the cell projection. It localises to the axon. The protein localises to the cytoplasm. The catalysed reaction is carcinine + H2O = histamine + beta-alanine. It carries out the reaction beta-alanyl-dopamine + H2O = dopamine + beta-alanine. In terms of biological role, in the cuticle, catalyzes the hydrolysis of beta-alanyl-dopamine releasing dopamine and beta-alanine; dopamine is a metabolite involved in the pigmentation and sclerotization of the insect cuticle. In the photoreceptor cells, catalyzes the hydrolysis of carcinine releasing histamine and beta-alanine contributing to the recycling of the neurotransmitter histamine in the optical nerve system. Also, regulates the cuticular hydrocarbon composition in females. This chain is Beta-alanyl-dopamine/carcinine hydrolase, found in Drosophila melanogaster (Fruit fly).